Consider the following 139-residue polypeptide: Non-structural protein 1 (139 aa).

A DLNP; interaction with MAP1B motif is present at residues 136–139 (DLNS).

It belongs to the pneumovirus non-structural protein 1 family. Monomer. Homomultimer. Heteromultimer with NS2. Interacts with the matrix protein M. Interacts with host ELOC and CUL2; this interaction allows NS1 to form an active E3 ligase with ELOC and CUL2. Interacts with host IRF3; this interaction leads to the disrupted association of IRF3 with CREBBP and thus reduced binding of IRF3 to the IFN-beta promoter. Interacts with host MAVS; this interaction prevents MAVS binding to RIGI and inhibits signaling pathway leading to interferon production. Interacts with host MAP1B/microtubule-associated protein 1B. Interacts with host TRIM25 (via SPRY domain); this interaction suppresses RIGI ubiquitination and results in decreased interaction between RIGI and MAVS.

It is found in the host cytoplasm. It localises to the host mitochondrion. The protein localises to the host nucleus. In terms of biological role, plays a major role in antagonizing the type I IFN-mediated antiviral response by degrading or inhibiting multiple cellular factors required for either IFN induction or response pathways. Acts cooperatively with NS2 to repress activation and nuclear translocation of host IFN-regulatory factor IRF3. Also disrupts the association of IRF3 with CREBBP. Interacts with host mitochondrial-associated membrane (MAM) MAVS and prevents the interaction with RIGI. Interacts with TRIM25 to suppress TRIM25-mediated RIGI ubiquitination and thereby RIGI-MAVS interaction. Together with NS2, participates in the proteasomal degradation of host STAT2, IRF3, IRF7, TBK1 and RIGI through a NS-degradasome involving CUL2 and Elongin-C. The degradasome requires an intact mitochondrial MAVS. Decreases the levels of host TRAF3 and IKBKE/IKK-epsilon. As functions other than disruptions of the type I IFN-mediated antiviral signaling pathways, induces host SOCS1 and SOCS3 expression. Suppresses premature apoptosis by an NF-kappa-B-dependent, interferon-independent mechanism and thus facilitates virus growth. Additionally, NS1 may serve some inhibitory role in viral transcription and RNA replication. Suppresses proliferation and activation of host CD103+ CD8+ cytotoxic T-lymphocytes and Th17 helper T-lymphocytes. This chain is Non-structural protein 1 (1C), found in Homo sapiens (Human).